Consider the following 382-residue polypeptide: V-type proton ATPase subunit C 1 (382 aa).

An N-acetylthreonine modification is found at Thr2.

Belongs to the V-ATPase C subunit family. In terms of assembly, V-ATPase is a heteromultimeric enzyme made up of two complexes: the ATP-hydrolytic V1 complex and the proton translocation V0 complex. The V1 complex consists of three catalytic AB heterodimers that form a heterohexamer, three peripheral stalks each consisting of EG heterodimers, one central rotor including subunits D and F, and the regulatory subunits C and H. The proton translocation complex V0 consists of the proton transport subunit a, a ring of proteolipid subunits c9c'', rotary subunit d, subunits e and f, and the accessory subunits ATP6AP1/Ac45 and ATP6AP2/PRR. Ubiquitous. Abundant in brain, liver, kidney and testis.

Its subcellular location is the cytoplasmic vesicle. It localises to the secretory vesicle. The protein localises to the synaptic vesicle membrane. The protein resides in the clathrin-coated vesicle membrane. Functionally, subunit of the V1 complex of vacuolar(H+)-ATPase (V-ATPase), a multisubunit enzyme composed of a peripheral complex (V1) that hydrolyzes ATP and a membrane integral complex (V0) that translocates protons. V-ATPase is responsible for acidifying and maintaining the pH of intracellular compartments and in some cell types, is targeted to the plasma membrane, where it is responsible for acidifying the extracellular environment. Subunit C is necessary for the assembly of the catalytic sector of the enzyme and is likely to have a specific function in its catalytic activity. The polypeptide is V-type proton ATPase subunit C 1 (Atp6v1c1) (Mus musculus (Mouse)).